The sequence spans 263 residues: uncharacterized protein (263 aa).

It belongs to the flavoredoxin family. The cofactor is FMN.

This is an uncharacterized protein from Aeropyrum pernix (strain ATCC 700893 / DSM 11879 / JCM 9820 / NBRC 100138 / K1).